Consider the following 429-residue polypeptide: Methylenetetrahydrofolate--tRNA-(uracil-5-)-methyltransferase TrmFO (429 aa).

Position 7 to 12 (7 to 12 (GAGLAG)) interacts with FAD.

The protein belongs to the MnmG family. TrmFO subfamily. FAD is required as a cofactor.

Its subcellular location is the cytoplasm. It catalyses the reaction uridine(54) in tRNA + (6R)-5,10-methylene-5,6,7,8-tetrahydrofolate + NADH + H(+) = 5-methyluridine(54) in tRNA + (6S)-5,6,7,8-tetrahydrofolate + NAD(+). It carries out the reaction uridine(54) in tRNA + (6R)-5,10-methylene-5,6,7,8-tetrahydrofolate + NADPH + H(+) = 5-methyluridine(54) in tRNA + (6S)-5,6,7,8-tetrahydrofolate + NADP(+). In terms of biological role, catalyzes the folate-dependent formation of 5-methyl-uridine at position 54 (M-5-U54) in all tRNAs. This is Methylenetetrahydrofolate--tRNA-(uracil-5-)-methyltransferase TrmFO from Thermosipho melanesiensis (strain DSM 12029 / CIP 104789 / BI429).